Here is a 949-residue protein sequence, read N- to C-terminus: MAM domain-containing glycosylphosphatidylinositol anchor protein 2 (949 aa).

The signal sequence occupies residues 1–25 (MDLVYGLVWLLTVLLEGISGQGVYA). 2 Ig-like domains span residues 27 to 127 (PTVR…IRVD) and 134 to 232 (PVVT…KMVS). 2 disulfide bridges follow: Cys62–Cys110 and Cys159–Cys216. N-linked (GlcNAc...) asparagine glycosylation is found at Asn92, Asn213, and Asn237. Ig-like domains lie at 242–328 (PSIK…NIIV), 340–436 (PDPY…VNIS), 442–533 (PNLT…ALVQ), and 540–627 (PAVE…FLVT). 2 cysteine pairs are disulfide-bonded: Cys264/Cys310 and Cys359/Cys417. N-linked (GlcNAc...) asparagine glycosylation is found at Asn434, Asn443, Asn504, Asn610, and Asn703. 2 disulfides stabilise this stretch: Cys465–Cys515 and Cys561–Cys611. One can recognise a Fibronectin type-III domain in the interval 638 to 738 (DTYNPVWQNR…TIRVIKYTGE (101 aa)). An MAM domain is found at 739–914 (FHCGFEDGNI…VSIAEGECAK (176 aa)). Asp924 is lipidated: GPI-anchor amidated aspartate. Positions 925-949 (GAVGILVHIWLFPVIILISILSPRR) are cleaved as a propeptide — removed in mature form.

In terms of assembly, interacts (through the Ig-like domains) with NLGN2.

Its subcellular location is the cell membrane. Functionally, may be involved in cell-cell interactions. This is MAM domain-containing glycosylphosphatidylinositol anchor protein 2 (Mdga2) from Mus musculus (Mouse).